We begin with the raw amino-acid sequence, 249 residues long: Aspartate/glutamate leucyltransferase (249 aa).

The protein belongs to the R-transferase family. Bpt subfamily.

It is found in the cytoplasm. The catalysed reaction is N-terminal L-glutamyl-[protein] + L-leucyl-tRNA(Leu) = N-terminal L-leucyl-L-glutamyl-[protein] + tRNA(Leu) + H(+). It catalyses the reaction N-terminal L-aspartyl-[protein] + L-leucyl-tRNA(Leu) = N-terminal L-leucyl-L-aspartyl-[protein] + tRNA(Leu) + H(+). In terms of biological role, functions in the N-end rule pathway of protein degradation where it conjugates Leu from its aminoacyl-tRNA to the N-termini of proteins containing an N-terminal aspartate or glutamate. In Brucella anthropi (strain ATCC 49188 / DSM 6882 / CCUG 24695 / JCM 21032 / LMG 3331 / NBRC 15819 / NCTC 12168 / Alc 37) (Ochrobactrum anthropi), this protein is Aspartate/glutamate leucyltransferase.